The chain runs to 671 residues: MEPIEQQLTELRTTLRHHEYLYHVMDAPEVPDAEYDRLMRKLRELESQHPELITPDSPTQRVGAAPLTAFSQIRHEVPMLSLDNVFDEESFLAFNKRVQDRLKSTDHLTYCCELKLDGLAVSILYENGVLVQAATRGDGTTGEDITSNVRTIRAIPLKLHGENIPARLEVRGEVFLPQAGFEKINEEARRTGGKVFANPRNAAAGSLRQLDPRITAKRPLTFFCYGVGVLEGGELPASHSARLLQFKAWGLPVSDRVTLCHTPEEVLTYYRKVEEERPHLGFDIDGVVIKVDSLALQEQLGFVARAPRWAVAFKFPAQEQMTFVRDVEFQVGRTGAITPVARLEPVHVAGVLVSNATLHNADEIERLGLKIGDKVVIRRAGDVIPQVVNVVLSERPADARDVVFPTHCPVCQSDVERVEGEAVARCTGGLICGAQRKESLKHFVSRRALDVDGMGDKIIDQLVEKEYVHTPADLFRLTAGKLTGLDRMGPKSAQNVVNALEKAKETTFARFLYALGIREVGEATAAGLAAHFGTLEALEQASIEELQKVPDVGIVVATHTFNFFAEESNRDVIAQLLAEGVRWPAPVVVKAEEIDSPFAGKTVVLTGSLSQLSRDDAKARLVALGAKVAGSVSKKTDLVIAGEAAGSKLAKAQELGIEVIDEAEMMRLLGE.

NAD(+) is bound by residues 32-36 (DAEYD), 81-82 (SL), and Glu113. Lys115 functions as the N6-AMP-lysine intermediate in the catalytic mechanism. Residues Arg136, Glu173, Lys290, and Lys314 each coordinate NAD(+). Cys408, Cys411, Cys426, and Cys432 together coordinate Zn(2+). Residues 593 to 671 (EIDSPFAGKT…EAEMMRLLGE (79 aa)) form the BRCT domain.

The protein belongs to the NAD-dependent DNA ligase family. LigA subfamily. Requires Mg(2+) as cofactor. The cofactor is Mn(2+).

The catalysed reaction is NAD(+) + (deoxyribonucleotide)n-3'-hydroxyl + 5'-phospho-(deoxyribonucleotide)m = (deoxyribonucleotide)n+m + AMP + beta-nicotinamide D-nucleotide.. DNA ligase that catalyzes the formation of phosphodiester linkages between 5'-phosphoryl and 3'-hydroxyl groups in double-stranded DNA using NAD as a coenzyme and as the energy source for the reaction. It is essential for DNA replication and repair of damaged DNA. This is DNA ligase from Klebsiella pneumoniae subsp. pneumoniae (strain ATCC 700721 / MGH 78578).